A 283-amino-acid chain; its full sequence is MELWYTEEHTDKVRFSIKVDEQLYSGKSDFQRIDVFKSQEFGTFFTLDGLMMVTEKDEFIYHDMIVHVPMATNPNIKNVLVIGAGDGGTVRELTRYETIEKIDMVEIDKLVVDVCREYLPQTANKLDDPRVSLFFEDGLKFVRSVENKYDLIIVDSTDPFGPGEGLFTREFYGNCFKALKEDGILVNQHESPYYEEYARGMKRAHKRIKECFPVCRVYQAHIPTYPSGHWLFGFASKKYDPLNADIEKWNDLGLKTKYYNTDLHKGCFALPNYVKEMLENVDE.

The region spanning 2–237 (ELWYTEEHTD…GHWLFGFASK (236 aa)) is the PABS domain. Q31 lines the S-methyl-5'-thioadenosine pocket. 2 residues coordinate spermidine: H62 and D86. S-methyl-5'-thioadenosine is bound by residues E106 and 137–138 (DG). Residue D155 is the Proton acceptor of the active site. 155 to 158 (DSTD) contacts spermidine. P162 is an S-methyl-5'-thioadenosine binding site.

It belongs to the spermidine/spermine synthase family. Homodimer or homotetramer.

The protein localises to the cytoplasm. It catalyses the reaction S-adenosyl 3-(methylsulfanyl)propylamine + putrescine = S-methyl-5'-thioadenosine + spermidine + H(+). The protein operates within amine and polyamine biosynthesis; spermidine biosynthesis; spermidine from putrescine: step 1/1. Its function is as follows. Catalyzes the irreversible transfer of a propylamine group from the amino donor S-adenosylmethioninamine (decarboxy-AdoMet) to putrescine (1,4-diaminobutane) to yield spermidine. The polypeptide is Polyamine aminopropyltransferase (Clostridium perfringens (strain 13 / Type A)).